Reading from the N-terminus, the 295-residue chain is Acetylglutamate kinase (295 aa).

Substrate contacts are provided by residues 66–67 (GG), Arg88, and Asn193.

This sequence belongs to the acetylglutamate kinase family. ArgB subfamily.

It is found in the cytoplasm. The catalysed reaction is N-acetyl-L-glutamate + ATP = N-acetyl-L-glutamyl 5-phosphate + ADP. It participates in amino-acid biosynthesis; L-arginine biosynthesis; N(2)-acetyl-L-ornithine from L-glutamate: step 2/4. Its function is as follows. Catalyzes the ATP-dependent phosphorylation of N-acetyl-L-glutamate. This chain is Acetylglutamate kinase, found in Afipia carboxidovorans (strain ATCC 49405 / DSM 1227 / KCTC 32145 / OM5) (Oligotropha carboxidovorans).